A 332-amino-acid chain; its full sequence is 2-hydroxyacid dehydrogenase homolog 1 (332 aa).

NAD(+) is bound by residues 154 to 155, 233 to 235, and D259; these read RI and TSR. R235 is an active-site residue. Residue E264 is part of the active site. H296 (proton donor) is an active-site residue. 296–299 is a binding site for NAD(+); it reads HQAF.

The protein belongs to the D-isomer specific 2-hydroxyacid dehydrogenase family.

It is found in the cytoplasm. It localises to the nucleus. The protein is 2-hydroxyacid dehydrogenase homolog 1 of Schizosaccharomyces pombe (strain 972 / ATCC 24843) (Fission yeast).